A 373-amino-acid polypeptide reads, in one-letter code: Queuine tRNA-ribosyltransferase (373 aa).

Aspartate 94 serves as the catalytic Proton acceptor. Substrate-binding positions include 94-98, aspartate 148, glutamine 190, and glycine 217; that span reads DSGGF. Residues 248-254 are RNA binding; sequence GVGSPDC. The active-site Nucleophile is the aspartate 267. The tract at residues 272-276 is RNA binding; important for wobble base 34 recognition; that stretch reads TRIAR. 4 residues coordinate Zn(2+): cysteine 305, cysteine 307, cysteine 310, and histidine 336.

It belongs to the queuine tRNA-ribosyltransferase family. As to quaternary structure, homodimer. Within each dimer, one monomer is responsible for RNA recognition and catalysis, while the other monomer binds to the replacement base PreQ1. Zn(2+) serves as cofactor.

The catalysed reaction is 7-aminomethyl-7-carbaguanine + guanosine(34) in tRNA = 7-aminomethyl-7-carbaguanosine(34) in tRNA + guanine. It participates in tRNA modification; tRNA-queuosine biosynthesis. Catalyzes the base-exchange of a guanine (G) residue with the queuine precursor 7-aminomethyl-7-deazaguanine (PreQ1) at position 34 (anticodon wobble position) in tRNAs with GU(N) anticodons (tRNA-Asp, -Asn, -His and -Tyr). Catalysis occurs through a double-displacement mechanism. The nucleophile active site attacks the C1' of nucleotide 34 to detach the guanine base from the RNA, forming a covalent enzyme-RNA intermediate. The proton acceptor active site deprotonates the incoming PreQ1, allowing a nucleophilic attack on the C1' of the ribose to form the product. After dissociation, two additional enzymatic reactions on the tRNA convert PreQ1 to queuine (Q), resulting in the hypermodified nucleoside queuosine (7-(((4,5-cis-dihydroxy-2-cyclopenten-1-yl)amino)methyl)-7-deazaguanosine). This chain is Queuine tRNA-ribosyltransferase, found in Moorella thermoacetica (strain ATCC 39073 / JCM 9320).